We begin with the raw amino-acid sequence, 96 residues long: Antitoxin ParD4 (96 aa).

Belongs to the ParD antitoxin family.

Its function is as follows. Antitoxin component of a type II toxin-antitoxin (TA) system. Neutralizes the effect of cognate toxin ParE4, but no other RelE or ParE toxin. The protein is Antitoxin ParD4 (parD4) of Caulobacter vibrioides (strain ATCC 19089 / CIP 103742 / CB 15) (Caulobacter crescentus).